The primary structure comprises 350 residues: tRNA dimethylallyltransferase (350 aa).

34–41 (GPTASGKT) is an ATP binding site. Residue 36 to 41 (TASGKT) coordinates substrate. Interaction with substrate tRNA stretches follow at residues 63–66 (DSAL), 187–191 (QRIQR), and 274–279 (RCVGYR).

Belongs to the IPP transferase family. In terms of assembly, monomer. Mg(2+) serves as cofactor.

It catalyses the reaction adenosine(37) in tRNA + dimethylallyl diphosphate = N(6)-dimethylallyladenosine(37) in tRNA + diphosphate. Its function is as follows. Catalyzes the transfer of a dimethylallyl group onto the adenine at position 37 in tRNAs that read codons beginning with uridine, leading to the formation of N6-(dimethylallyl)adenosine (i(6)A). The sequence is that of tRNA dimethylallyltransferase from Paracidovorax citrulli (strain AAC00-1) (Acidovorax citrulli).